The chain runs to 210 residues: MTDDTTKNGPDATAADAAADATAYVENETAQQEPAQPDPIELLKAENGELRDRYLRLAAEMDNLRRRTEREVKDAKSYSVAGFARDMLAVSDNLRRALDAISPETKATADAGLSTLIEGVEMTERAMLSALERHGVRKLEPVGQKFDPNFHQAMFEVPNPDVPNNTVVQVVQAGFTIGERVLRPAMVGVAKGGPKPAEAETNSVFDEKDA.

Disordered stretches follow at residues 1–40 (MTDD…PDPI) and 191–210 (KGGP…EKDA). The span at 11–23 (DATAADAAADATA) shows a compositional bias: low complexity.

The protein belongs to the GrpE family. As to quaternary structure, homodimer.

It is found in the cytoplasm. Participates actively in the response to hyperosmotic and heat shock by preventing the aggregation of stress-denatured proteins, in association with DnaK and GrpE. It is the nucleotide exchange factor for DnaK and may function as a thermosensor. Unfolded proteins bind initially to DnaJ; upon interaction with the DnaJ-bound protein, DnaK hydrolyzes its bound ATP, resulting in the formation of a stable complex. GrpE releases ADP from DnaK; ATP binding to DnaK triggers the release of the substrate protein, thus completing the reaction cycle. Several rounds of ATP-dependent interactions between DnaJ, DnaK and GrpE are required for fully efficient folding. This Rhizobium johnstonii (strain DSM 114642 / LMG 32736 / 3841) (Rhizobium leguminosarum bv. viciae) protein is Protein GrpE.